A 262-amino-acid polypeptide reads, in one-letter code: Cytochrome c oxidase subunit 3 (262 aa).

A run of 7 helical transmembrane segments spans residues 13–33, 38–58, 82–102, 134–154, 159–179, 200–220, and 237–257; these read PWPL…VMYM, GGGL…YVWW, GMLL…WAFF, TIIL…ILAG, GIIS…FQAL, ATGF…VCLF, and AAAW…VCIY.

Belongs to the cytochrome c oxidase subunit 3 family. In terms of assembly, component of the cytochrome c oxidase (complex IV, CIV), a multisubunit enzyme composed of a catalytic core of 3 subunits and several supernumerary subunits. The complex exists as a monomer or a dimer and forms supercomplexes (SCs) in the inner mitochondrial membrane with ubiquinol-cytochrome c oxidoreductase (cytochrome b-c1 complex, complex III, CIII).

Its subcellular location is the mitochondrion inner membrane. It catalyses the reaction 4 Fe(II)-[cytochrome c] + O2 + 8 H(+)(in) = 4 Fe(III)-[cytochrome c] + 2 H2O + 4 H(+)(out). Its function is as follows. Component of the cytochrome c oxidase, the last enzyme in the mitochondrial electron transport chain which drives oxidative phosphorylation. The respiratory chain contains 3 multisubunit complexes succinate dehydrogenase (complex II, CII), ubiquinol-cytochrome c oxidoreductase (cytochrome b-c1 complex, complex III, CIII) and cytochrome c oxidase (complex IV, CIV), that cooperate to transfer electrons derived from NADH and succinate to molecular oxygen, creating an electrochemical gradient over the inner membrane that drives transmembrane transport and the ATP synthase. Cytochrome c oxidase is the component of the respiratory chain that catalyzes the reduction of oxygen to water. Electrons originating from reduced cytochrome c in the intermembrane space (IMS) are transferred via the dinuclear copper A center (CU(A)) of subunit 2 and heme A of subunit 1 to the active site in subunit 1, a binuclear center (BNC) formed by heme A3 and copper B (CU(B)). The BNC reduces molecular oxygen to 2 water molecules using 4 electrons from cytochrome c in the IMS and 4 protons from the mitochondrial matrix. This is Cytochrome c oxidase subunit 3 (COX3) from Prototheca wickerhamii.